Reading from the N-terminus, the 122-residue chain is Large ribosomal subunit protein uL29B (122 aa).

Residues 10 to 69 (QLGIKQIEERAAEIKAELAALRQKKNSGDVGANDIKTAKKNLARALTVRREKILEELVEA) are a coiled coil.

The protein belongs to the universal ribosomal protein uL29 family. Component of the large ribosomal subunit.

The protein localises to the cytoplasm. The chain is Large ribosomal subunit protein uL29B (RPL35C) from Encephalitozoon cuniculi (strain GB-M1) (Microsporidian parasite).